A 284-amino-acid polypeptide reads, in one-letter code: Bifunctional protein FolD (284 aa).

NADP(+)-binding positions include 166 to 168 and I232; that span reads GAS.

The protein belongs to the tetrahydrofolate dehydrogenase/cyclohydrolase family. Homodimer.

The enzyme catalyses (6R)-5,10-methylene-5,6,7,8-tetrahydrofolate + NADP(+) = (6R)-5,10-methenyltetrahydrofolate + NADPH. The catalysed reaction is (6R)-5,10-methenyltetrahydrofolate + H2O = (6R)-10-formyltetrahydrofolate + H(+). Its pathway is one-carbon metabolism; tetrahydrofolate interconversion. Functionally, catalyzes the oxidation of 5,10-methylenetetrahydrofolate to 5,10-methenyltetrahydrofolate and then the hydrolysis of 5,10-methenyltetrahydrofolate to 10-formyltetrahydrofolate. The polypeptide is Bifunctional protein FolD (Alteromonas mediterranea (strain DSM 17117 / CIP 110805 / LMG 28347 / Deep ecotype)).